Here is a 450-residue protein sequence, read N- to C-terminus: tRNA-2-methylthio-N(6)-dimethylallyladenosine synthase (450 aa).

The MTTase N-terminal domain occupies 17–131 (KKFFVKTYGC…LNHVLDEVLA (115 aa)). Residues Cys-26, Cys-62, Cys-94, Cys-168, Cys-172, and Cys-175 each coordinate [4Fe-4S] cluster. A Radical SAM core domain is found at 154–385 (REDQIKAYVS…LQLQDTIYMK (232 aa)). In terms of domain architecture, TRAM spans 388 to 450 (QAFLGQTVEV…SHQTLLGDLQ (63 aa)).

Belongs to the methylthiotransferase family. MiaB subfamily. As to quaternary structure, monomer. Requires [4Fe-4S] cluster as cofactor.

The protein localises to the cytoplasm. It catalyses the reaction N(6)-dimethylallyladenosine(37) in tRNA + (sulfur carrier)-SH + AH2 + 2 S-adenosyl-L-methionine = 2-methylsulfanyl-N(6)-dimethylallyladenosine(37) in tRNA + (sulfur carrier)-H + 5'-deoxyadenosine + L-methionine + A + S-adenosyl-L-homocysteine + 2 H(+). Catalyzes the methylthiolation of N6-(dimethylallyl)adenosine (i(6)A), leading to the formation of 2-methylthio-N6-(dimethylallyl)adenosine (ms(2)i(6)A) at position 37 in tRNAs that read codons beginning with uridine. The sequence is that of tRNA-2-methylthio-N(6)-dimethylallyladenosine synthase from Protochlamydia amoebophila (strain UWE25).